Consider the following 338-residue polypeptide: DNA-directed RNA polymerase subunit alpha (338 aa).

The interval 1-225 is alpha N-terminal domain (alpha-NTD); it reads MLISQRPTLT…ELFGLARELN (225 aa). The alpha C-terminal domain (alpha-CTD) stretch occupies residues 242-338; it reads YIAAYSMPIE…YIDVEPEDAE (97 aa). Residues 314-338 form a disordered region; sequence FDPSTLEGYDAETGGYIDVEPEDAE.

Belongs to the RNA polymerase alpha chain family. As to quaternary structure, homodimer. The RNAP catalytic core consists of 2 alpha, 1 beta, 1 beta' and 1 omega subunit. When a sigma factor is associated with the core the holoenzyme is formed, which can initiate transcription.

It carries out the reaction RNA(n) + a ribonucleoside 5'-triphosphate = RNA(n+1) + diphosphate. DNA-dependent RNA polymerase catalyzes the transcription of DNA into RNA using the four ribonucleoside triphosphates as substrates. This is DNA-directed RNA polymerase subunit alpha from Corynebacterium efficiens (strain DSM 44549 / YS-314 / AJ 12310 / JCM 11189 / NBRC 100395).